The chain runs to 226 residues: ATP-dependent dethiobiotin synthetase BioD (226 aa).

12–17 (GVGKTV) contributes to the ATP binding site. T16 contributes to the Mg(2+) binding site. Residue K37 is part of the active site. T41 lines the substrate pocket. ATP contacts are provided by residues D49, 108-111 (EGAG), and 197-199 (PAG). 2 residues coordinate Mg(2+): D49 and E108.

Belongs to the dethiobiotin synthetase family. In terms of assembly, homodimer. Mg(2+) is required as a cofactor.

Its subcellular location is the cytoplasm. It carries out the reaction (7R,8S)-7,8-diammoniononanoate + CO2 + ATP = (4R,5S)-dethiobiotin + ADP + phosphate + 3 H(+). It functions in the pathway cofactor biosynthesis; biotin biosynthesis; biotin from 7,8-diaminononanoate: step 1/2. Catalyzes a mechanistically unusual reaction, the ATP-dependent insertion of CO2 between the N7 and N8 nitrogen atoms of 7,8-diaminopelargonic acid (DAPA, also called 7,8-diammoniononanoate) to form a ureido ring. This Mycobacterium avium (strain 104) protein is ATP-dependent dethiobiotin synthetase BioD.